The primary structure comprises 356 residues: MSKEPIIKLDNIDVTFHQKKREINAVKDVTIHINQGDIYGIVGYSGAGKSTLVRVINLLQEPSAGKITIDNQVIYDNKVTLTSTQLREQRREIGMIFQHFNLMSQLTAEQNVAFALKHSGLSKEAKAAKVAKLLELVGLSDRAQNYPSQLSGGQKQRVAIARALANDPKILISDESTSALDPKTTKQILALLQDLNKKLGLTIVLITHEMQIVKDIANRVAVMQNGKLIEEGSVLDIFSHPRESLTQDFIKIATGIDEAMLKIEQQEVVKNLPVGSKLVQLKYAGHSTDEPLLNQIYKEFEVTANILYGNIEILDGIPVGEMVVILSGDEEKLRQACQAITDSQVQLTLLKEGGKA.

The ABC transporter domain maps to 7–250 (IKLDNIDVTF…PRESLTQDFI (244 aa)). Position 43 to 50 (43 to 50 (GYSGAGKS)) interacts with ATP.

It belongs to the ABC transporter superfamily. Methionine importer (TC 3.A.1.24) family. As to quaternary structure, the complex is composed of two ATP-binding proteins (MetN), two transmembrane proteins (MetI) and a solute-binding protein (MetQ).

The protein resides in the cell membrane. The enzyme catalyses L-methionine(out) + ATP + H2O = L-methionine(in) + ADP + phosphate + H(+). It catalyses the reaction D-methionine(out) + ATP + H2O = D-methionine(in) + ADP + phosphate + H(+). Functionally, part of the ABC transporter complex MetNIQ involved in methionine import. Responsible for energy coupling to the transport system. The chain is Methionine import ATP-binding protein MetN from Streptococcus agalactiae serotype III (strain NEM316).